A 329-amino-acid chain; its full sequence is Ribosomal protein L11 methyltransferase (329 aa).

S-adenosyl-L-methionine is bound by residues Thr177, Gly198, Asp220, and Asn264.

Belongs to the methyltransferase superfamily. PrmA family.

It localises to the cytoplasm. The enzyme catalyses L-lysyl-[protein] + 3 S-adenosyl-L-methionine = N(6),N(6),N(6)-trimethyl-L-lysyl-[protein] + 3 S-adenosyl-L-homocysteine + 3 H(+). Its function is as follows. Methylates ribosomal protein L11. In Helicobacter pylori (strain HPAG1), this protein is Ribosomal protein L11 methyltransferase.